The sequence spans 976 residues: Vacuolar membrane protease (976 aa).

Topologically, residues 1–15 (MKLKSVFRSVLKYRK) are cytoplasmic. Residues 16 to 36 (TNLSLLLLITYSIITLLYIFD) form a helical membrane-spanning segment. Over 37–359 (HERYKLNLPK…KFFVISAKTL (323 aa)) the chain is Vacuolar. Residues Asn-96 and Asn-121 are each glycosylated (N-linked (GlcNAc...) asparagine). Zn(2+) is bound by residues His-156 and Asp-168. Asn-189 carries an N-linked (GlcNAc...) asparagine glycan. Glu-200 functions as the Proton acceptor in the catalytic mechanism. Glu-201 is a binding site for Zn(2+). N-linked (GlcNAc...) asparagine glycans are attached at residues Asn-212 and Asn-217. Residues Glu-226 and His-300 each contribute to the Zn(2+) site. Residues 360 to 380 (FYWNCIFLLVSPVVAIGLYLI) traverse the membrane as a helical segment. Residues 381–392 (SRDRMTWKSHSW) are Cytoplasmic-facing. A helical transmembrane segment spans residues 393-412 (LSWTRFPLSLAAGIIVQKLF). Residues 413-428 (SNDIIRSNPLTFSRNY) lie on the Vacuolar side of the membrane. The helical transmembrane segment at 429–449 (FWPISAFFTQVIFTSYVLINC) threads the bilayer. Topologically, residues 450 to 461 (SNFFFPCADMKS) are cytoplasmic. The helical transmembrane segment at 462–482 (LSIIELFIILWTILLFTSKLL) threads the bilayer. The Vacuolar segment spans residues 483-496 (YSSDYRYTGLYPLS). A helical membrane pass occupies residues 497 to 517 (IFFLLSTIAAILRLLALALGM). Topologically, residues 518–627 (RTRKRLGREC…NSLKLEYTDY (110 aa)) are cytoplasmic. The tract at residues 528-610 (RDHHSNYSSH…PLLKGSNSME (83 aa)) is disordered. The span at 549-558 (NLEQPQDQFT) shows a compositional bias: polar residues. Positions 559–570 (SSQDDQASIQDD) are enriched in low complexity. The span at 582–601 (NVDEDHGMDSSSQQHDERVP) shows a compositional bias: basic and acidic residues. The chain crosses the membrane as a helical span at residues 628–648 (AWIIQFLLIVPIPSFILFNSV). At 649 to 668 (DVIMDALNHTVQEGSKATFD) the chain is on the vacuolar side. A glycan (N-linked (GlcNAc...) asparagine) is linked at Asn-656. The helical transmembrane segment at 669–689 (VLRFGMVGSILMALPILPFFY) threads the bilayer. Residues 690–692 (KVN) lie on the Cytoplasmic side of the membrane. A helical membrane pass occupies residues 693-713 (YITISLTALLFLISASKTLLV). Topologically, residues 714–976 (HPFTNSNPLK…LVIVKDAIIL (263 aa)) are vacuolar. Asn-768, Asn-796, Asn-811, Asn-866, and Asn-937 each carry an N-linked (GlcNAc...) asparagine glycan.

It belongs to the peptidase M28 family. The cofactor is Zn(2+).

It localises to the vacuole membrane. In terms of biological role, may be involved in vacuolar sorting and osmoregulation. The sequence is that of Vacuolar membrane protease from Saccharomyces cerevisiae (strain Lalvin EC1118 / Prise de mousse) (Baker's yeast).